The sequence spans 699 residues: Elongation factor G (699 aa).

A tr-type G domain is found at 8-283; the sequence is EHIRNIGICA…AVVDFLPSPI (276 aa). Residues 17 to 24, 81 to 85, and 135 to 138 each bind GTP; these read AHIDAGKT, DTPGH, and NKMD.

It belongs to the TRAFAC class translation factor GTPase superfamily. Classic translation factor GTPase family. EF-G/EF-2 subfamily.

It localises to the cytoplasm. Catalyzes the GTP-dependent ribosomal translocation step during translation elongation. During this step, the ribosome changes from the pre-translocational (PRE) to the post-translocational (POST) state as the newly formed A-site-bound peptidyl-tRNA and P-site-bound deacylated tRNA move to the P and E sites, respectively. Catalyzes the coordinated movement of the two tRNA molecules, the mRNA and conformational changes in the ribosome. The chain is Elongation factor G from Rickettsia peacockii (strain Rustic).